A 677-amino-acid chain; its full sequence is O-fucosyltransferase 27 (677 aa).

The helical; Signal-anchor for type II membrane protein transmembrane segment at 15–35 (WIGLLGLVLSAFSLLVHFLLA) threads the bilayer. The N-linked (GlcNAc...) asparagine glycan is linked to Asn-130. The segment at 410 to 437 (PPSIEVETKHDSLKSTRQRPQPLPPPPA) is disordered. Residues Asn-542 and Asn-592 are each glycosylated (N-linked (GlcNAc...) asparagine). The tract at residues 619–677 (NAEKEEDLDEEDLSSSGLFFGHKESGGNNNGNNETVNSEANNKEEGQLEDQEELEGSER) is disordered. Residues 622–631 (KEEDLDEEDL) are compositionally biased toward acidic residues. The span at 644-658 (GGNNNGNNETVNSEA) shows a compositional bias: low complexity. N-linked (GlcNAc...) asparagine glycosylation is present at Asn-651. Residues 665 to 677 (QLEDQEELEGSER) are compositionally biased toward acidic residues.

This sequence belongs to the glycosyltransferase GT106 family.

The protein resides in the membrane. It functions in the pathway glycan metabolism. The chain is O-fucosyltransferase 27 from Arabidopsis thaliana (Mouse-ear cress).